Here is a 294-residue protein sequence, read N- to C-terminus: 4-hydroxy-tetrahydrodipicolinate synthase (294 aa).

Thr-44 provides a ligand contact to pyruvate. The Proton donor/acceptor role is filled by Tyr-132. Lys-160 functions as the Schiff-base intermediate with substrate in the catalytic mechanism. Val-202 lines the pyruvate pocket.

It belongs to the DapA family. In terms of assembly, homotetramer; dimer of dimers.

Its subcellular location is the cytoplasm. It carries out the reaction L-aspartate 4-semialdehyde + pyruvate = (2S,4S)-4-hydroxy-2,3,4,5-tetrahydrodipicolinate + H2O + H(+). The protein operates within amino-acid biosynthesis; L-lysine biosynthesis via DAP pathway; (S)-tetrahydrodipicolinate from L-aspartate: step 3/4. Functionally, catalyzes the condensation of (S)-aspartate-beta-semialdehyde [(S)-ASA] and pyruvate to 4-hydroxy-tetrahydrodipicolinate (HTPA). The chain is 4-hydroxy-tetrahydrodipicolinate synthase from Leptospira borgpetersenii serovar Hardjo-bovis (strain L550).